The sequence spans 197 residues: MFIISQYREHRSLSILTQTCTIFRSMQVSSKHENLSVSFHLTPLQVLIITGTSSGIGLAAATMALEEGAKVLGVDISKPPDSLARHANYQFFQADLSHPEAPARVVEACSRTYGDRIDGLLNIAGVMDLNQSADSLSDNVWERCISINLTAPVKLMREVIPIMKLRGKGSIVNVASKAALSGAVSGVAYTASEHPWP.

NADP(+) is bound by residues Ile-49, Asp-95, Arg-157, and Tyr-189. Tyr-189 serves as the catalytic Proton acceptor. Tyr-189 functions as the Proton donor in the catalytic mechanism.

Belongs to the short-chain dehydrogenases/reductases (SDR) family.

It functions in the pathway secondary metabolite biosynthesis; terpenoid biosynthesis. In terms of biological role, short chain dehydrogenase; part of the gene cluster A that mediates the biosynthesis of austinol and dehydroaustinol, two fungal meroterpenoids. The first step of the pathway is the synthesis of 3,5-dimethylorsellinic acid by the polyketide synthase ausA. 3,5-dimethylorsellinic acid is then prenylated by the polyprenyl transferase ausN. Further epoxidation by the FAD-dependent monooxygenase ausM and cyclization by the probable terpene cyclase ausL lead to the formation of protoaustinoid A. Protoaustinoid A is then oxidized to spiro-lactone preaustinoid A3 by the combined action of the FAD-binding monooxygenases ausB and ausC, and the dioxygenase ausE. Acid-catalyzed keto-rearrangement and ring contraction of the tetraketide portion of preaustinoid A3 by ausJ lead to the formation of preaustinoid A4. The aldo-keto reductase ausK, with the help of ausH, is involved in the next step by transforming preaustinoid A4 into isoaustinone which is in turn hydroxylated by the P450 monooxygenase ausI to form austinolide. Finally, the cytochrome P450 monooxygenase ausG modifies austinolide to austinol. Austinol can be further modified to dehydroaustinol which forms a diffusible complex with diorcinol that initiates conidiation. Due to genetic rearrangements of the clusters and the subsequent loss of some enzymes, the end products of the Emericella nidulans austinoid biosynthesis clusters are austinol and dehydroaustinol, even if additional enzymes, such as the O-acetyltransferase ausQ and the cytochrome P450 monooxygenase ausR are still functional. The polypeptide is Short chain dehydrogenase ausX (Emericella nidulans (strain FGSC A4 / ATCC 38163 / CBS 112.46 / NRRL 194 / M139) (Aspergillus nidulans)).